Here is a 610-residue protein sequence, read N- to C-terminus: Transcription termination factor Rho (610 aa).

A disordered region spans residues 117-227 (EVSRRERRGA…GDGAEAELRQ (111 aa)). A compositionally biased stretch (basic and acidic residues) spans 118 to 131 (VSRRERRGASREAD). Residues 178–187 (GVEQQSSSLQ) are compositionally biased toward polar residues. A compositionally biased stretch (basic and acidic residues) spans 189–198 (RGDDDGEGRQ). Basic residues predominate over residues 199–214 (GRRGRRFRDRDRRRRG). The segment covering 215–227 (ERSGDGAEAELRQ) has biased composition (basic and acidic residues). Residues 231-309 (VQPVAGILDV…VRLDSINGGS (79 aa)) enclose the Rho RNA-BD domain. ATP is bound by residues 352 to 357 (GKGQRA), 364 to 369 (KAGKTT), and Arg-395.

This sequence belongs to the Rho family. In terms of assembly, homohexamer. The homohexamer assembles into an open ring structure.

Functionally, facilitates transcription termination by a mechanism that involves Rho binding to the nascent RNA, activation of Rho's RNA-dependent ATPase activity, and release of the mRNA from the DNA template. The polypeptide is Transcription termination factor Rho (Mycobacterium leprae (strain TN)).